A 206-amino-acid polypeptide reads, in one-letter code: MAEDADMRNELEEMQRRADQLADESLESTRRMLQLVEESKDAGIRTLVMLDEQGEQLERIEEGMDQINKDMKEAEKNLTDLGKFCGLCVCPCNKLKSSDAYKKAWGNNQDGVVASQPARVVDEREQMAISGGFIRRVTNDARENEMDENLEQVSGIIGNLRHMALDMGNEIDTQNRQIDRIMEKADSNKTRIDEANQRATKMLGSG.

Basic and acidic residues predominate over residues 1–20 (MAEDADMRNELEEMQRRADQ). Residues 1–23 (MAEDADMRNELEEMQRRADQLAD) form a disordered region. A t-SNARE coiled-coil homology 1 domain is found at 19-81 (DQLADESLES…KEAEKNLTDL (63 aa)). S-palmitoyl cysteine attachment occurs at residues Cys85, Cys88, Cys90, and Cys92. The residue at position 138 (Thr138) is a Phosphothreonine. Residues 140-202 (DARENEMDEN…DEANQRATKM (63 aa)) enclose the t-SNARE coiled-coil homology 2 domain. Ser187 bears the Phosphoserine mark.

It belongs to the SNAP-25 family. In terms of assembly, part of the SNARE core complex containing SNAP25, VAMP2 and STX1A. This complex binds CPLX1. Interacts with TRIM9, RIMS1 and SNAPIN. Binds STXBP6. Found in a ternary complex with STX1A and VAMP8. Associates with the BLOC-1 complex. Isoform 1 and isoform 2 interact with BLOC1S6. Interacts with alpha-synuclein/SNCA. Post-translationally, palmitoylated. Cys-85 appears to be the main site, and palmitoylation is required for membrane association.

The protein resides in the membrane. Its subcellular location is the synapse. The protein localises to the synaptosome. It is found in the cell membrane. T-SNARE involved in the molecular regulation of neurotransmitter release. May play an important role in the synaptic function of specific neuronal systems. Associates with proteins involved in vesicle docking and membrane fusion. This is Synaptosomal-associated protein 25 (SNAP25) from Gallus gallus (Chicken).